Consider the following 898-residue polypeptide: Pyruvate, phosphate dikinase (898 aa).

The interval 1-355 is N-terminal; the sequence is MAKWVYTFGA…LWMLQTRSGK (355 aa). ATP is bound at residue arginine 96. Residues 356-412 form a linker 1 region; that stretch reads RTAKSALKIAVDMAEEGLISKEEAVARIDPASLDQLLHPTIDPHARRDIIGSGLPAS. The interval 413–511 is central; that stretch reads PGAATGEIVF…TLRKGDVITI (99 aa). The residue at position 466 (threonine 466) is a Phosphothreonine; by PDRP1. The active-site Tele-phosphohistidine intermediate is histidine 468. The tract at residues 512-546 is linker 2; that stretch reads DGSSGQVLKGEIPMLQPELSGDFGKIMQWADASRR. The tract at residues 547–898 is C-terminal; sequence MTVRTNAETP…VAEVQALAAS (352 aa). Positions 574, 630, 758, 779, 780, 781, and 782 each coordinate substrate. Residue glutamate 758 coordinates Mg(2+). Residue aspartate 782 participates in Mg(2+) binding. Cysteine 844 serves as the catalytic Proton donor.

It belongs to the PEP-utilizing enzyme family. In terms of assembly, homodimer. The cofactor is Mg(2+). In terms of processing, phosphorylation of Thr-466 in the dark inactivates the enzyme. Dephosphorylation upon light stimulation reactivates the enzyme.

The catalysed reaction is pyruvate + phosphate + ATP = phosphoenolpyruvate + AMP + diphosphate + H(+). Its activity is regulated as follows. Activated by light-induced dephosphorylation. Inhibited by dark-induced phosphorylation. Both reactions are catalyzed by PDRP1. In terms of biological role, catalyzes the reversible phosphorylation of pyruvate and phosphate. The chain is Pyruvate, phosphate dikinase (ppdK) from Rhizobium meliloti (strain 1021) (Ensifer meliloti).